We begin with the raw amino-acid sequence, 297 residues long: Phosphoribosylaminoimidazole-succinocarboxamide synthase (297 aa).

It belongs to the SAICAR synthetase family.

It carries out the reaction 5-amino-1-(5-phospho-D-ribosyl)imidazole-4-carboxylate + L-aspartate + ATP = (2S)-2-[5-amino-1-(5-phospho-beta-D-ribosyl)imidazole-4-carboxamido]succinate + ADP + phosphate + 2 H(+). Its pathway is purine metabolism; IMP biosynthesis via de novo pathway; 5-amino-1-(5-phospho-D-ribosyl)imidazole-4-carboxamide from 5-amino-1-(5-phospho-D-ribosyl)imidazole-4-carboxylate: step 1/2. This is Phosphoribosylaminoimidazole-succinocarboxamide synthase from Mycobacteroides abscessus (strain ATCC 19977 / DSM 44196 / CCUG 20993 / CIP 104536 / JCM 13569 / NCTC 13031 / TMC 1543 / L948) (Mycobacterium abscessus).